Consider the following 319-residue polypeptide: tRNA dimethylallyltransferase (319 aa).

10–17 (GPTAVGKT) is an ATP binding site. Residue 12 to 17 (TAVGKT) coordinates substrate. Residues 35 to 38 (DSMQ) are interaction with substrate tRNA.

The protein belongs to the IPP transferase family. In terms of assembly, monomer. It depends on Mg(2+) as a cofactor.

It carries out the reaction adenosine(37) in tRNA + dimethylallyl diphosphate = N(6)-dimethylallyladenosine(37) in tRNA + diphosphate. Functionally, catalyzes the transfer of a dimethylallyl group onto the adenine at position 37 in tRNAs that read codons beginning with uridine, leading to the formation of N6-(dimethylallyl)adenosine (i(6)A). The protein is tRNA dimethylallyltransferase of Symbiobacterium thermophilum (strain DSM 24528 / JCM 14929 / IAM 14863 / T).